Consider the following 476-residue polypeptide: Methylenetetrahydrofolate--tRNA-(uracil-5-)-methyltransferase TrmFO (476 aa).

FAD is bound at residue 13–18; the sequence is GGGLAG. The disordered stretch occupies residues 425 to 446; sequence PPLESPPTHGADGKKLRGPDKT. Residues 435-446 show a composition bias toward basic and acidic residues; that stretch reads ADGKKLRGPDKT.

Belongs to the MnmG family. TrmFO subfamily. FAD serves as cofactor.

The protein resides in the cytoplasm. The enzyme catalyses uridine(54) in tRNA + (6R)-5,10-methylene-5,6,7,8-tetrahydrofolate + NADH + H(+) = 5-methyluridine(54) in tRNA + (6S)-5,6,7,8-tetrahydrofolate + NAD(+). It carries out the reaction uridine(54) in tRNA + (6R)-5,10-methylene-5,6,7,8-tetrahydrofolate + NADPH + H(+) = 5-methyluridine(54) in tRNA + (6S)-5,6,7,8-tetrahydrofolate + NADP(+). Catalyzes the folate-dependent formation of 5-methyl-uridine at position 54 (M-5-U54) in all tRNAs. The chain is Methylenetetrahydrofolate--tRNA-(uracil-5-)-methyltransferase TrmFO from Rhodopseudomonas palustris (strain BisB18).